We begin with the raw amino-acid sequence, 1739 residues long: MAAAGCLYRRTSRELWTILLGRSSMKDGHQIKAELDRYGDRLLQGLAYYRPPSTSSTGKVKANKNLSPALQELGLRLSKFLGLDEEQSVELLQTYLLYDYRGTQESVKGVPQDERQSQALMLKASMVDYYYEERISLLRCVLYILNYFQDDKHPYSAEFSKCVEMMEQKELFGKYLKQFESLCREEAPTWETHGNFMTERQVSRWFVQRLREQAMLLEIIFLYFACFAASPSDLLALTKLFKEQGFGCRLQNRHLVEPSMDPLVERIGYFSVLIFLEALDIETLMTCSLSDKTEQHPFSSEEQVCKEMDSVLVTLGDAPHHGPVLLAWALLRFALNADKVTPTVRKMGSTAIQLHIFQYLTRMLQSLRSGENNCTTSTACLCVYTFLTFVLTNLEEQVLQSQQDLVDTAFQVFAAPNLPDLFWNMEPTAGLGILLDSVVGMFPFHLSPLLKLFTALVSKSSAKKVYSFLDRMSSYTEHYRHKPHDILSHEDETLWKRQTPKVLYALGLGQTNLRIPQGTIGQVMADEHGFLVRWEYSYSCWTLFTCEIEMLLHVVSTADVIHQCQRVKPIIDLVHKVISTDLSIADCLLPITSRIYMLLQRLTTVMNPPMDFLSSCVDCLAALATRMPAKVWIDLRHTGFLPFAANPVSGHIISTEGMNAGGYGSLFGIEQSQGEYSITLSFLRLVTTLVKGQLGSTQSQGLVPCILFVLREMLPNYHRWRYNSHGVREQLGFQILSLIHAILNLSPEEEESTSTPNLQSLCIFSLTNTEAGQAVINIMGVGVDTLNAVMLTQAGSSGTEGQGQMLMQTIKLAFSITNNVIRLKPLSSAISPLEHALTQHGAHGNNLIAVLAKYIYHKYDPSLPRLAIQLLKRLAMVAPMSVYACLGSDAAAIRDAFLSRLRDNIEDMQIKIMILEFLTVAVETQPGLIELFLNLEVKDTNEGSKEYSLGEWSCLQVVLKLIDSQDPESSWGAPLLHRSAIAFLHALWQDRRDSAMTVLRTKPNFWENLTSPLFGTLAFPSESSELSILETCAFIMKIICLEIYYAVRGSLGDSLKKILKKFSEEERFTYWSNYVHSLVCQVAESEGACNSLTEYQQLLSAWRMFLMVATHNADVMHLTNPEVRQKLFKDVLGGTQALLLVPRSMTCLHLGSMLCTVMIILLRRWKSDLAAPEDILSSLTQILEGVLQKDQQLVEKTKARVFAALISALEIKPMKASEIPQYPQLVLNVCETLQEEVVFLVDHTRQEVPANDASEDKDSMETEDTGRIRQKDQRDGVCVLGLHLAKGLCEADEEGDQWQQVLRKLPVLPMLFSALEVSLRIKQNLHFCEAILHFLFTLAKTHQGAAAMAGAGVTQTVCLPLLSVYQLSSNGASTAQPALSLRKSLDAPSWPGVYRLTVSLMERLLKTLRYNFLTEALDFVGVHQERILQCLGAVRTVPSLACLEEADHTVGFLLQLSNFTKEWHFHLPQLIKDVQVNLCYLCQACTSLLHSRKMLQHYLQIKNGETMSSTATPRGQRTPQTPSKQPTAESEALELRQLRSVQHSLLKILGKTLATLRAFTPDLCQILQPLDLAQYNLLFALSFTTPAFDADVTPSFGTLLATVNVTLSMLGEMDKKKDHPLGQVLGETNSTVDNKNIKSLLLFIMENCFYLLISQAVRYLRDPSVHPRDKQRMKQELSSELSTLLSSLSRYFRRGGPSSPAGGLMPSPQPKGASAAKVVPEAQEPLIQLVQAFVRHVQR.

Disordered regions lie at residues 1249 to 1269 (PAND…GRIR), 1506 to 1530 (TMSS…TAES), and 1696 to 1717 (GPSS…SAAK). The segment covering 1254 to 1269 (SEDKDSMETEDTGRIR) has biased composition (basic and acidic residues). Residues 1506 to 1528 (TMSSTATPRGQRTPQTPSKQPTA) show a composition bias toward polar residues.

This sequence belongs to the Nup188 family. In terms of assembly, part of the nuclear pore complex (NPC).

It is found in the nucleus. The protein resides in the nuclear pore complex. Component of the nuclear pore complex (NPC), a complex required for the trafficking across the nuclear envelope. Required for proper protein transport into the nucleus. In Xenopus tropicalis (Western clawed frog), this protein is Nucleoporin NUP188 (nup188).